We begin with the raw amino-acid sequence, 55 residues long: Large ribosomal subunit protein bL33 (55 aa).

It belongs to the bacterial ribosomal protein bL33 family.

In Caulobacter sp. (strain K31), this protein is Large ribosomal subunit protein bL33.